The sequence spans 730 residues: Denticleless protein homolog (730 aa).

Methionine 1 is subject to N-acetylmethionine. 3 WD repeats span residues 47-89 (GVPV…FRKK), 96-135 (AHWN…LIGT), and 138-178 (GHQC…KDGF). Residues 168 to 171 (WDTR) carry the DDB1-binding motif motif. Residues 188 to 198 (AHNTSDKQTPS) are compositionally biased toward polar residues. Residues 188 to 210 (AHNTSDKQTPSKPKKKQNSKGLA) form a disordered region. A Phosphothreonine modification is found at threonine 196. Residues 197–203 (PSKPKKK) carry the Nuclear localization signal motif. WD repeat units follow at residues 214 to 253 (DFQQ…TAYR), 267 to 308 (SSTR…TSPV), 313 to 354 (GHQN…QPPT), and 358 to 398 (GHSQ…EEKP). The DDB1-binding motif motif lies at 243–246 (WDLR). Residues 399-443 (GGDKLSTVGWASQKKKESRPGLVTVTSSQSTPAKAPRAKCNPSNS) form a disordered region. A phosphoserine mark is found at serine 410 and serine 426. Threonine 464 is modified (phosphothreonine; by CDK1 and CDK2). Residues 465 to 498 (PTFSIKTSPAKARSPINRRGSVSSVSPKPPSSFK) form a disordered region. Serine 485, serine 490, serine 495, and serine 512 each carry phosphoserine. Threonine 516 carries the post-translational modification Phosphothreonine. Phosphoserine is present on serine 557. Disordered stretches follow at residues 599 to 631 (SKDS…YASE) and 644 to 703 (GEGS…TITP). Residues serine 676 and serine 679 each carry the phosphoserine modification. The span at 679 to 689 (SPSSQTPNSRR) shows a compositional bias: polar residues. 2 positions are modified to phosphothreonine: threonine 684 and threonine 702. Serine 717 bears the Phosphoserine mark.

It belongs to the WD repeat cdt2 family. In terms of assembly, component of the DCX(DTL) E3 ubiquitin ligase complex (also called CRL4(CDT2)), at least composed of CUL4 (CUL4A or CUL4B), DDB1, DTL/CDT2 and RBX1. Interacts with CDKN1A. Interacts with DDB1. Interacts with FBXO11; SCF(FBXWO11) controls DTL stability but DCX(DTL) does not control FBXO11 stability. Interacts with CRY1. Ubiquitinated by the anaphase promoting complex/cyclosome (APC/C). Autoubiquitinated through 'Lys-48'-polyubiquitin chains in a PCNA-independent reaction, allowing proteasomal turnover. Polyubiquitinated by SCF(FBXO11) when not phosphorylated, leading to its degradation. A tight regulation of the polyubiquitination by SCF(FBXO11) is involved in the control of different processes such as TGF-beta signaling, cell cycle progression and exit. Post-translationally, phosphorylated at Thr-464 by CDK1/Cyclin-B and CDK2/Cyclin-A but not by CDK2/Cyclin-E, MAPK1 or PLK1. Phosphorylation at Thr-464 inhibits the interaction with FBXO11 and decreases upon cell cycle exit induced by TGF-beta or serum starvation. Expressed in placenta and testis, very low expression seen in skeletal muscle. Detected in all hematopoietic tissues examined, with highest expression in thymus and bone marrow. A low level detected in the spleen and lymph node, and barely detectable level in the peripheral leukocytes. RA treatment down-regulated the expression in NT2 cell.

The protein localises to the nucleus. It localises to the nucleus membrane. The protein resides in the cytoplasm. It is found in the cytoskeleton. Its subcellular location is the microtubule organizing center. The protein localises to the centrosome. It localises to the chromosome. The protein operates within protein modification; protein ubiquitination. Its function is as follows. Substrate-specific adapter of a DCX (DDB1-CUL4-X-box) E3 ubiquitin-protein ligase complex required for cell cycle control, DNA damage response and translesion DNA synthesis. The DCX(DTL) complex, also named CRL4(CDT2) complex, mediates the polyubiquitination and subsequent degradation of CDT1, CDKN1A/p21(CIP1), FBH1, KMT5A and SDE2. CDT1 degradation in response to DNA damage is necessary to ensure proper cell cycle regulation of DNA replication. CDKN1A/p21(CIP1) degradation during S phase or following UV irradiation is essential to control replication licensing. KMT5A degradation is also important for a proper regulation of mechanisms such as TGF-beta signaling, cell cycle progression, DNA repair and cell migration. Most substrates require their interaction with PCNA for their polyubiquitination: substrates interact with PCNA via their PIP-box, and those containing the 'K+4' motif in the PIP box, recruit the DCX(DTL) complex, leading to their degradation. In undamaged proliferating cells, the DCX(DTL) complex also promotes the 'Lys-164' monoubiquitination of PCNA, thereby being involved in PCNA-dependent translesion DNA synthesis. The DDB1-CUL4A-DTL E3 ligase complex regulates the circadian clock function by mediating the ubiquitination and degradation of CRY1. In Homo sapiens (Human), this protein is Denticleless protein homolog (DTL).